The primary structure comprises 238 residues: Demethylmenaquinone methyltransferase (238 aa).

Residues Thr-65, Asp-85, and 109–110 each bind S-adenosyl-L-methionine; that span reads DA.

Belongs to the class I-like SAM-binding methyltransferase superfamily. MenG/UbiE family.

The catalysed reaction is a 2-demethylmenaquinol + S-adenosyl-L-methionine = a menaquinol + S-adenosyl-L-homocysteine + H(+). Its pathway is quinol/quinone metabolism; menaquinone biosynthesis; menaquinol from 1,4-dihydroxy-2-naphthoate: step 2/2. In terms of biological role, methyltransferase required for the conversion of demethylmenaquinol (DMKH2) to menaquinol (MKH2). The chain is Demethylmenaquinone methyltransferase from Roseiflexus sp. (strain RS-1).